The chain runs to 501 residues: 1-aminocyclopropane-1-carboxylate synthase-like protein 1 (501 aa).

Glutamate 105 serves as a coordination point for substrate. Lysine 323 is subject to N6-(pyridoxal phosphate)lysine. Positions 480-501 (GKSQVAEDPRPSQSQEPSDQRR) are disordered. The span at 490 to 501 (PSQSQEPSDQRR) shows a compositional bias: polar residues.

Belongs to the class-I pyridoxal-phosphate-dependent aminotransferase family.

In terms of biological role, does not catalyze the synthesis of 1-aminocyclopropane-1-carboxylate but is capable of catalyzing the deamination of L-vinylglycine. The polypeptide is 1-aminocyclopropane-1-carboxylate synthase-like protein 1 (ACCS) (Homo sapiens (Human)).